The primary structure comprises 254 residues: MDLGYLYGLICSIYGAVEDWRKREVTDFLWISMLWVGVFIHLLYNKSLLLFFIEIFAVLFITLSVRYEKFNKLVYIGVFLFLLSFILFKSYFALSFLVFYLIGIFLYYLNFMGGGDCKFLMGLSYLKGMFFTFIIFLNAILFVIPYCIFILLINLKNGNHKRLKLKNLPLLFIALKKDIDKVKKFETIMGDDENLSLIPNINEEKEEKKTYKGKVWVTPQLPFLVFICLSYILYIVSPFPLIFKVIELVIKSHF.

Transmembrane regions (helical) follow at residues 33–53 (MLWV…LFFI), 70–90 (FNKL…LFKS), 92–112 (FALS…LNFM), 133–153 (FIIF…ILLI), and 223–243 (FLVF…PLIF).

To M.jannaschii MJ0902.

It is found in the cell membrane. This is an uncharacterized protein from Methanocaldococcus jannaschii (strain ATCC 43067 / DSM 2661 / JAL-1 / JCM 10045 / NBRC 100440) (Methanococcus jannaschii).